Consider the following 432-residue polypeptide: Adenylosuccinate synthetase (432 aa).

GTP-binding positions include 12 to 18 (GDEGKGK) and 40 to 42 (GHT). The active-site Proton acceptor is Asp13. The Mg(2+) site is built by Asp13 and Gly40. IMP-binding positions include 13–16 (DEGK), 38–41 (NAGH), Thr130, Arg144, Gln225, Thr240, and Arg304. The active-site Proton donor is the His41. 300-306 (STTGRPR) provides a ligand contact to substrate. GTP-binding positions include Arg306, 332–334 (KLD), and 414–416 (SVG).

The protein belongs to the adenylosuccinate synthetase family. As to quaternary structure, homodimer. It depends on Mg(2+) as a cofactor.

The protein localises to the cytoplasm. The catalysed reaction is IMP + L-aspartate + GTP = N(6)-(1,2-dicarboxyethyl)-AMP + GDP + phosphate + 2 H(+). It functions in the pathway purine metabolism; AMP biosynthesis via de novo pathway; AMP from IMP: step 1/2. Functionally, plays an important role in the de novo pathway of purine nucleotide biosynthesis. Catalyzes the first committed step in the biosynthesis of AMP from IMP. The polypeptide is Adenylosuccinate synthetase (Geobacter sp. (strain M21)).